The primary structure comprises 471 residues: Ribulose bisphosphate carboxylase large chain (471 aa).

A propeptide spanning residues 1-2 is cleaved from the precursor; it reads MS. Pro-3 carries the post-translational modification N-acetylproline. Residue Lys-14 is modified to N6,N6,N6-trimethyllysine. 2 residues coordinate substrate: Asn-123 and Thr-173. Lys-175 acts as the Proton acceptor in catalysis. Lys-177 serves as a coordination point for substrate. Mg(2+) contacts are provided by Lys-201, Asp-203, and Glu-204. Lys-201 carries the post-translational modification N6-carboxylysine. Catalysis depends on His-294, which acts as the Proton acceptor. The substrate site is built by Arg-295, His-327, and Ser-379.

This sequence belongs to the RuBisCO large chain family. Type I subfamily. Heterohexadecamer of 8 large chains and 8 small chains; disulfide-linked. The disulfide link is formed within the large subunit homodimers. It depends on Mg(2+) as a cofactor. Post-translationally, the disulfide bond which can form in the large chain dimeric partners within the hexadecamer appears to be associated with oxidative stress and protein turnover.

The protein resides in the plastid. It is found in the chloroplast. The enzyme catalyses 2 (2R)-3-phosphoglycerate + 2 H(+) = D-ribulose 1,5-bisphosphate + CO2 + H2O. It catalyses the reaction D-ribulose 1,5-bisphosphate + O2 = 2-phosphoglycolate + (2R)-3-phosphoglycerate + 2 H(+). Functionally, ruBisCO catalyzes two reactions: the carboxylation of D-ribulose 1,5-bisphosphate, the primary event in carbon dioxide fixation, as well as the oxidative fragmentation of the pentose substrate in the photorespiration process. Both reactions occur simultaneously and in competition at the same active site. The protein is Ribulose bisphosphate carboxylase large chain of Drymophloeus subdistichus (Palm tree).